A 67-amino-acid polypeptide reads, in one-letter code: Large ribosomal subunit protein uL29 (67 aa).

The protein belongs to the universal ribosomal protein uL29 family.

The protein is Large ribosomal subunit protein uL29 (rpmC) of Halalkalibacterium halodurans (strain ATCC BAA-125 / DSM 18197 / FERM 7344 / JCM 9153 / C-125) (Bacillus halodurans).